A 433-amino-acid polypeptide reads, in one-letter code: Enolase (433 aa).

Residue Gln-166 coordinates (2R)-2-phosphoglycerate. Glu-208 acts as the Proton donor in catalysis. Residues Asp-245, Glu-289, and Asp-316 each coordinate Mg(2+). Positions 341, 370, 371, and 392 each coordinate (2R)-2-phosphoglycerate. Residue Lys-341 is the Proton acceptor of the active site.

The protein belongs to the enolase family. It depends on Mg(2+) as a cofactor.

It localises to the cytoplasm. The protein resides in the secreted. The protein localises to the cell surface. The catalysed reaction is (2R)-2-phosphoglycerate = phosphoenolpyruvate + H2O. The protein operates within carbohydrate degradation; glycolysis; pyruvate from D-glyceraldehyde 3-phosphate: step 4/5. In terms of biological role, catalyzes the reversible conversion of 2-phosphoglycerate (2-PG) into phosphoenolpyruvate (PEP). It is essential for the degradation of carbohydrates via glycolysis. In Acetivibrio thermocellus (strain ATCC 27405 / DSM 1237 / JCM 9322 / NBRC 103400 / NCIMB 10682 / NRRL B-4536 / VPI 7372) (Clostridium thermocellum), this protein is Enolase.